Here is a 188-residue protein sequence, read N- to C-terminus: Putative manganese efflux pump MntP (188 aa).

A run of 6 helical transmembrane segments spans residues Met3–Gly23, Leu39–Leu59, Ile65–Ile85, Gly104–Ser124, Leu125–Val145, and Ile167–Gly187.

It belongs to the MntP (TC 9.B.29) family.

It is found in the cell inner membrane. Its function is as follows. Probably functions as a manganese efflux pump. The sequence is that of Putative manganese efflux pump MntP from Syntrophotalea carbinolica (strain DSM 2380 / NBRC 103641 / GraBd1) (Pelobacter carbinolicus).